Reading from the N-terminus, the 1000-residue chain is Chromosome transmission fidelity protein 18 homolog (1000 aa).

3 disordered regions span residues 53-89 (SAGD…RDAS), 130-159 (AGNS…DSKF), and 272-301 (EFGE…SHSL). Positions 60-70 (SNANSKPTGDS) are enriched in polar residues. The span at 272-295 (EFGENDSEILENDDNAGEEDDEDE) shows a compositional bias: acidic residues. ATP is bound at residue 396-403 (GPPGLGKT). Residues 888-898 (ARNAGRDNTTA) are compositionally biased toward polar residues. Residues 888 to 916 (ARNAGRDNTTAAAAVKTADPKGAKSAAKP) form a disordered region.

This sequence belongs to the activator 1 small subunits family. CTF18 subfamily. In terms of assembly, component of the CTF18-RFC complex, which consists of ctf18, ctf8, dcc1, rfc2, rfc3, rfc4 and rfc5. The CTF18-RFC complex associates with pcna.

It localises to the nucleus. Its function is as follows. Chromosome cohesion factor involved in sister chromatid cohesion and fidelity of chromosome transmission. Component of one of the cell nuclear antigen loader complexes, CTF18-replication factor C (CTF18-RFC), which consists of ctf18, ctf8, dcc1, rfc2, rfc3, rfc4 and rfc5. The CTF18-RFC complex binds to single-stranded and primed DNAs and has weak ATPase activity that is stimulated by the presence of primed DNA, replication protein A (RPA) and by proliferating cell nuclear antigen (pcna). The CTF18-RFC complex catalyzes the ATP-dependent loading of pcna onto primed and gapped DNA. In Xenopus laevis (African clawed frog), this protein is Chromosome transmission fidelity protein 18 homolog (chtf18).